We begin with the raw amino-acid sequence, 670 residues long: DEAD-box ATP-dependent RNA helicase 16 (670 aa).

A compositionally biased stretch (low complexity) spans 1–10 (MAAAAAASSM). Residues 1–97 (MAAAAAASSM…EEREVSFDEL (97 aa)) are disordered. Composition is skewed to basic and acidic residues over residues 18 to 30 (AATE…HDEA) and 40 to 49 (NDGHTAHAAE). The Q motif signature appears at 92–120 (VSFDELGLDEQLKRALRKKGLDKATPIQR). Residues 123–306 (IPLILEGKDV…KLLLHNPFIL (184 aa)) enclose the Helicase ATP-binding domain. Position 136-143 (136-143 (AKTGSGKT)) interacts with ATP. Residues 254 to 257 (DEAD) carry the DEAD box motif. In terms of domain architecture, Helicase C-terminal spans 340–523 (LVLLKLELIQ…PFPLLTKNAV (184 aa)). Residues 616–670 (DIDKPRRRKRMGFKGGSGRSSDPLKTFSAEGKSRRRGRKERDGEQDRRKRKKVES) are disordered. The span at 654 to 670 (KERDGEQDRRKRKKVES) shows a compositional bias: basic and acidic residues.

The protein belongs to the DEAD box helicase family. DDX56/DBP9 subfamily.

The enzyme catalyses ATP + H2O = ADP + phosphate + H(+). The chain is DEAD-box ATP-dependent RNA helicase 16 from Oryza sativa subsp. japonica (Rice).